The chain runs to 257 residues: UPF0246 protein BAV2675 (257 aa).

The protein belongs to the UPF0246 family.

This Bordetella avium (strain 197N) protein is UPF0246 protein BAV2675.